We begin with the raw amino-acid sequence, 387 residues long: Protein NDRG3 (387 aa).

A disordered region spans residues 329–387; the sequence is PSASMTRLVRSRTHSASSSGSMEMPRSRSHTSNAQLQSTSNNSLSNQIQETPHTIELSC. Over residues 359–377 the composition is skewed to low complexity; the sequence is TSNAQLQSTSNNSLSNQIQ.

It belongs to the NDRG family.

The polypeptide is Protein NDRG3 (Xenopus tropicalis (Western clawed frog)).